The following is a 430-amino-acid chain: Alpha-1,6-mannosyl-glycoprotein 2-beta-N-acetylglucosaminyltransferase (430 aa).

Residues 1–12 (MANLWKKQRLRD) are Cytoplasmic-facing. A helical; Signal-anchor for type II membrane protein membrane pass occupies residues 13–35 (TGLCRLGILFAVTLSIVLMLVSV). At 36–430 (PRTALNGSSI…YRYSSSSASP (395 aa)) the chain is on the lumenal side. N-linked (GlcNAc...) asparagine glycosylation is found at N41 and N61. Substrate contacts are provided by residues 104 to 108 (YVHNR) and D135. The cysteines at positions 177 and 188 are disulfide-linked. Residue 205 to 209 (SLKHH) coordinates substrate. Mn(2+) is bound at residue D237. C259 and C262 form a disulfide bridge. Residue N295 is glycosylated (N-linked (GlcNAc...) asparagine). C310 and C414 are disulfide-bonded. Residue H345 participates in Mn(2+) binding.

The protein belongs to the glycosyltransferase 16 (GT16) protein family. Mn(2+) is required as a cofactor.

It localises to the golgi apparatus membrane. It carries out the reaction an N(4)-{beta-D-GlcNAc-(1-&gt;2)-alpha-D-Man-(1-&gt;3)-[alpha-D-Man-(1-&gt;6)]-beta-D-Man-(1-&gt;4)-beta-D-GlcNAc-(1-&gt;4)-beta-D-GlcNAc}-L-asparaginyl-[protein] + UDP-N-acetyl-alpha-D-glucosamine = N(4)-{beta-D-GlcNAc-(1-&gt;2)-alpha-D-Man-(1-&gt;3)-[beta-D-GlcNAc-(1-&gt;2)-alpha-D-Man-(1-&gt;6)]-beta-D-Man-(1-&gt;4)-beta-D-GlcNAc-(1-&gt;4)-beta-D-GlcNAc}-L-asparaginyl-[protein] + UDP + H(+). The protein operates within protein modification; protein glycosylation. Its function is as follows. Catalyzes an essential step in the conversion of oligo-mannose and hybrid to complex N-glycans. The chain is Alpha-1,6-mannosyl-glycoprotein 2-beta-N-acetylglucosaminyltransferase from Arabidopsis thaliana (Mouse-ear cress).